We begin with the raw amino-acid sequence, 24 residues long: Brevinin-1E (24 aa).

Cys-18 and Cys-24 are disulfide-bonded.

In terms of tissue distribution, expressed by the skin glands.

The protein localises to the secreted. Its function is as follows. Antimicrobial peptide. Stimulates insulin release by BRIN-BD11 cells in vitro. The polypeptide is Brevinin-1E (Pelophylax saharicus (Sahara frog)).